The chain runs to 846 residues: Aminopeptidase N (846 aa).

Residues Glu-120 and 252–256 contribute to the substrate site; that span reads GAMEN. His-288 serves as a coordination point for Zn(2+). Glu-289 serves as the catalytic Proton acceptor. The Zn(2+) site is built by His-292 and Glu-311.

This sequence belongs to the peptidase M1 family. In terms of assembly, monomer. The cofactor is Zn(2+).

The protein localises to the cytoplasm. The enzyme catalyses Release of an N-terminal amino acid, Xaa-|-Yaa- from a peptide, amide or arylamide. Xaa is preferably Ala, but may be most amino acids including Pro (slow action). When a terminal hydrophobic residue is followed by a prolyl residue, the two may be released as an intact Xaa-Pro dipeptide.. Functionally, aminopeptidase with broad substrate specificity to several peptides. It has more affinity for oligopeptides than for dipeptides. It plays an essential role in the metabolism, it may be involved in nitrogen supply or protein turnover. The polypeptide is Aminopeptidase N (pepN) (Lactococcus lactis subsp. lactis (strain IL1403) (Streptococcus lactis)).